The chain runs to 768 residues: DWHLDMQLTGKVVLSAAALLLVTVAYRLYKSRPAPAQRWGGNAQAEAKEEAQGSGQPAVQEASPGVLLTGPRRRRSSKGAEAPQGCSCENPRGPYVLVTGATSTDRKSQRKGSGEERGGQSSDSEQVPPCCRGQETRTAVSGNPDPPHLPRLGSEPNSSPAGLIAAADGSCAGGELSPPQDSKPPEHPGLGQLEPPHCHHPAPLQGSSDMNQSWVFTRVIGVNREEAGALEAASDVGLTLHQQEGAPNASYTFSSIARVRMEENFIQKVEGVEPRLKGKVYDYYVESTSQAIFQGRLAPRTAALTEVPSPRPPPRSLGTGAASGGQAGDTKGAAERAASPQPGPSPSTRGFSRKESLLQIAENPELQLQPDGFWLPAPPCPDPGALPGSGRSSQEPHVQLVAGTNFFHIPLTSASAPQVHLDLGNCYEVLTLAKRQNLEALKEAAYKVMSENYLQVLRSPDIYGCLSGAERELILQRRLQGRQYLVVADVSPKEDSGGLCCYDDELDVWRPLARLPPEAVSRGCAICSLFNYLFVVSGCQGPGHQPSSRVFCYNPLTGIWSEVCPLNQARPHCRLVALDGHLYAIGGECLNSVERYDPRLDRWDFAPPLPNDTFALAHTATACAKEIFVTGGSLRFLLFRFSAQEQRWWAGPAGGSKDRTAEMVAVNGFLYRFDLNRSLGIAVYRCSASTRLWYECATYRTPYPDAFQCAVVDNLIYCVGRRSTLCFLADSVSPRFVPKELRSFPAPQGTLLPTVLTLPTPDLPQTRV.

A helical transmembrane segment spans residues 12–29 (VVLSAAALLLVTVAYRLY). The disordered stretch occupies residues 35 to 210 (PAQRWGGNAQ…PAPLQGSSDM (176 aa)). Serine 77 bears the Phosphoserine mark. Residues 104–118 (TDRKSQRKGSGEERG) are compositionally biased toward basic and acidic residues. A glycan (N-linked (GlcNAc...) asparagine) is linked at asparagine 248. Positions 304 to 352 (LTEVPSPRPPPRSLGTGAASGGQAGDTKGAAERAASPQPGPSPSTRGFS) are disordered. One copy of the Kelch 1 repeat lies at 319–365 (TGAASGGQAGDTKGAAERAASPQPGPSPSTRGFSRKESLLQIAENPE). Serine 356 is modified (phosphoserine). The segment at 371 to 395 (DGFWLPAPPCPDPGALPGSGRSSQE) is disordered. 4 Kelch repeats span residues 483–529 (QYLV…ICSL), 532–580 (YLFV…ALDG), 581–623 (HLYA…ATAC), and 626–668 (EIFV…AVNG).

The protein localises to the membrane. This chain is Kelch domain-containing protein 7A (KLHDC7A), found in Pongo abelii (Sumatran orangutan).